Consider the following 117-residue polypeptide: Large ribosomal subunit protein bL20 (117 aa).

This sequence belongs to the bacterial ribosomal protein bL20 family.

Its function is as follows. Binds directly to 23S ribosomal RNA and is necessary for the in vitro assembly process of the 50S ribosomal subunit. It is not involved in the protein synthesizing functions of that subunit. The polypeptide is Large ribosomal subunit protein bL20 (rplT) (Rickettsia prowazekii (strain Madrid E)).